The sequence spans 673 residues: Acetate--CoA ligase [ADP-forming] II (673 aa).

One can recognise an ATP-grasp domain in the interval 9–45 (KALLEKYGIKTAKCIFCETEEQAVKAAKEIGFPVVMK). Residue 35-46 (AKEIGFPVVMKV) participates in ATP binding.

This sequence in the N-terminal section; belongs to the acetate CoA ligase beta subunit family. It in the C-terminal section; belongs to the acetate CoA ligase alpha subunit family. As to quaternary structure, homodimer.

The catalysed reaction is acetate + ATP + CoA = acetyl-CoA + ADP + phosphate. Activity requires divalent metal cations. Functionally, catalyzes the reversible conversion of a variety of acids to the corresponding acyl-CoA esters. Shows the highest activity with the aryl acids, indoleacetate and phenylacetate, as compared to acetate. In the reverse direction, phenylacetyl-CoA is the best substrate. Seems to be involved primarily in the degradation of aryl-CoA esters to the corresponding acids. Participates in the degradation of branched-chain amino acids via branched-chain-acyl-CoA esters. The protein is Acetate--CoA ligase [ADP-forming] II of Archaeoglobus fulgidus (strain ATCC 49558 / DSM 4304 / JCM 9628 / NBRC 100126 / VC-16).